A 334-amino-acid polypeptide reads, in one-letter code: G-protein coupled receptor 12 (334 aa).

Residues 1–48 are Extracellular-facing; that stretch reads MNEDPKVNLSGLPRDCIEAGTPENISAAVPSQGSVVESEPELVVNPWD. N-linked (GlcNAc...) asparagine glycosylation is found at asparagine 8 and asparagine 24. Residues 49-69 form a helical membrane-spanning segment; the sequence is IVLCSSGTLICCENAVVVLII. The Cytoplasmic segment spans residues 70–78; it reads FHSPSLRAP. A helical membrane pass occupies residues 79–99; that stretch reads MFLLIGSLALADLLAGLGLII. Residues 100–113 lie on the Extracellular side of the membrane; sequence NFVFAYLLQSEATK. A helical transmembrane segment spans residues 114-134; the sequence is LVTIGLIVASFSASVCSLLAI. Topologically, residues 135–158 are cytoplasmic; it reads TVDRYLSLYYALTYHSERTVTFTY. The helical transmembrane segment at 159–179 threads the bilayer; sequence VMLVMLWGTSTCLGLLPVMGW. Residues 180 to 199 lie on the Extracellular side of the membrane; it reads NCLRDESTCSVVRPLTKNNA. The helical transmembrane segment at 200–220 threads the bilayer; it reads AILSISFLFMFALMLQLYIQI. Over 221–252 the chain is Cytoplasmic; it reads CKIVMRHAHQIALQHHFLATSHYVTTRKGIST. The chain crosses the membrane as a helical span at residues 253-273; sequence LALILGTFAACWMPFTLYSLI. Over 274 to 282 the chain is Extracellular; that stretch reads ADYTYPSIY. A helical transmembrane segment spans residues 283-303; sequence TYATLLPATYNSIINPVIYAF. At 304–334 the chain is on the cytoplasmic side; sequence RNQEIQKALCLICCGCIPNTLSQRARSPSDV. Residue cysteine 317 is the site of S-palmitoyl cysteine attachment. Serine 330 and serine 332 each carry phosphoserine.

The protein belongs to the G-protein coupled receptor 1 family. Expressed in the brain, pituitary gland and testis.

The protein resides in the cell membrane. Its function is as follows. Receptor with constitutive G(s) signaling activity that activates cyclic AMP. Promotes neurite outgrowth and blocks myelin inhibition in neurons. The chain is G-protein coupled receptor 12 (Gpr12) from Rattus norvegicus (Rat).